The primary structure comprises 101 residues: Small ribosomal subunit protein bS18c (101 aa).

Positions 1 to 19 (MNKSKRPFTKSKRSFRRRL) are enriched in basic residues. The interval 1 to 23 (MNKSKRPFTKSKRSFRRRLPPIQ) is disordered.

This sequence belongs to the bacterial ribosomal protein bS18 family. Part of the 30S ribosomal subunit.

It is found in the plastid. It localises to the chloroplast. This chain is Small ribosomal subunit protein bS18c, found in Draba nemorosa (Woodland whitlowgrass).